The chain runs to 423 residues: Sorting nexin-4 (423 aa).

Over residues 1-21 (MTDKGKNDLTSKAKDKARGNP) the composition is skewed to basic and acidic residues. The tract at residues 1–25 (MTDKGKNDLTSKAKDKARGNPEKPP) is disordered. In terms of domain architecture, PX spans 29-157 (EIIVSDPQKR…TFLVSKDWES (129 aa)). A 1,2-diacyl-sn-glycero-3-phospho-(1D-myo-inositol-3-phosphate) contacts are provided by R78, S80, K104, and R123. Coiled coils occupy residues 217 to 252 (KKND…AKLK) and 346 to 381 (SRRE…ECLK).

This sequence belongs to the sorting nexin family. Forms a complex with ATG20 and ATG17. Binds also to SNC1 and SNX41.

Its subcellular location is the cytoplasm. It is found in the cytosol. It localises to the preautophagosomal structure membrane. The protein resides in the endosome membrane. Its function is as follows. Sorting nexin, involved in the separation or division of vacuoles throughout the entire life cycle of the cells. Involved in retrieval of late-Golgi SNAREs from post-Golgi endosomes to the trans-Golgi network, for cytoplasm to vacuole transport (Cvt), and autophagy of large cargos including mitophagy, pexophagy and glycophagy. Involved in proper sorting of the v-SNARE protein SNC1. The polypeptide is Sorting nexin-4 (Saccharomyces cerevisiae (strain ATCC 204508 / S288c) (Baker's yeast)).